The chain runs to 427 residues: Gamma-glutamyl phosphate reductase (427 aa).

The protein belongs to the gamma-glutamyl phosphate reductase family.

The protein resides in the cytoplasm. The catalysed reaction is L-glutamate 5-semialdehyde + phosphate + NADP(+) = L-glutamyl 5-phosphate + NADPH + H(+). It participates in amino-acid biosynthesis; L-proline biosynthesis; L-glutamate 5-semialdehyde from L-glutamate: step 2/2. Functionally, catalyzes the NADPH-dependent reduction of L-glutamate 5-phosphate into L-glutamate 5-semialdehyde and phosphate. The product spontaneously undergoes cyclization to form 1-pyrroline-5-carboxylate. In Rhizobium meliloti (strain 1021) (Ensifer meliloti), this protein is Gamma-glutamyl phosphate reductase.